We begin with the raw amino-acid sequence, 139 residues long: D-ribose pyranase (139 aa).

His-20 acts as the Proton donor in catalysis. Substrate-binding positions include Asp-28, His-106, and 128-130; that span reads YAN.

It belongs to the RbsD / FucU family. RbsD subfamily. In terms of assembly, homodecamer.

The protein resides in the cytoplasm. The catalysed reaction is beta-D-ribopyranose = beta-D-ribofuranose. It participates in carbohydrate metabolism; D-ribose degradation; D-ribose 5-phosphate from beta-D-ribopyranose: step 1/2. Its function is as follows. Catalyzes the interconversion of beta-pyran and beta-furan forms of D-ribose. This chain is D-ribose pyranase, found in Escherichia coli O139:H28 (strain E24377A / ETEC).